A 392-amino-acid chain; its full sequence is MSKTAYVRTKPHLNIGTMGHVDHGKTTLTAAITKVLAERGAGSTTQYVSFDRIDRAPEEAARGITINIAHVEYETDTRHYAHVDMPGHADYVKNMVTGAAQLDGAILVVSALDGIMPQTAEHVLLARQVGVDHIVVALNKADAGDEELTDLVELEVRELLTAHGYGGDAVPVVRVSGLKALEGDPRWTASVEALLDAVDTYVPMPERYLDAPFLLPVENVLTITGRGTVVTGAVERGTVRVGDRVEVLGASVETVVTGLETFGKPMEEAQAGDNVALLLRGVARDTVRRGQVVAAPGSVVPARRFRARVYVLSAREGGRSTPLTTGYRPQFYIRTADVVGDVDLGEEAVARPGDTVTMTVELGRDVPLETGLGFAIREGGRTVGAGTVTAVE.

One can recognise a tr-type G domain in the interval 10 to 206; it reads KPHLNIGTMG…AVDTYVPMPE (197 aa). A G1 region spans residues 19–26; the sequence is GHVDHGKT. 19–26 is a binding site for GTP; sequence GHVDHGKT. Position 26 (threonine 26) interacts with Mg(2+). The interval 63-67 is G2; it reads GITIN. The G3 stretch occupies residues 84-87; it reads DMPG. GTP-binding positions include 84–88 and 139–142; these read DMPGH and NKAD. The G4 stretch occupies residues 139-142; it reads NKAD. A G5 region spans residues 176 to 178; the sequence is SGL.

This sequence belongs to the TRAFAC class translation factor GTPase superfamily. Classic translation factor GTPase family. EF-Tu/EF-1A subfamily. In terms of assembly, monomer.

It localises to the cytoplasm. The enzyme catalyses GTP + H2O = GDP + phosphate + H(+). GTP hydrolase that promotes the GTP-dependent binding of aminoacyl-tRNA to the A-site of ribosomes during protein biosynthesis. The sequence is that of Elongation factor Tu-3 from Streptomyces coelicolor (strain ATCC BAA-471 / A3(2) / M145).